A 364-amino-acid polypeptide reads, in one-letter code: tRNA 2-selenouridine synthase (364 aa).

The Rhodanese domain occupies 14 to 137; the sequence is LIADTPIIDV…LRQTAIQATI (124 aa). Catalysis depends on cysteine 97, which acts as the S-selanylcysteine intermediate.

The protein belongs to the SelU family. In terms of assembly, monomer.

The enzyme catalyses 5-methylaminomethyl-2-thiouridine(34) in tRNA + selenophosphate + (2E)-geranyl diphosphate + H2O + H(+) = 5-methylaminomethyl-2-selenouridine(34) in tRNA + (2E)-thiogeraniol + phosphate + diphosphate. It carries out the reaction 5-methylaminomethyl-2-thiouridine(34) in tRNA + (2E)-geranyl diphosphate = 5-methylaminomethyl-S-(2E)-geranyl-thiouridine(34) in tRNA + diphosphate. It catalyses the reaction 5-methylaminomethyl-S-(2E)-geranyl-thiouridine(34) in tRNA + selenophosphate + H(+) = 5-methylaminomethyl-2-(Se-phospho)selenouridine(34) in tRNA + (2E)-thiogeraniol. The catalysed reaction is 5-methylaminomethyl-2-(Se-phospho)selenouridine(34) in tRNA + H2O = 5-methylaminomethyl-2-selenouridine(34) in tRNA + phosphate. Functionally, involved in the post-transcriptional modification of the uridine at the wobble position (U34) of tRNA(Lys), tRNA(Glu) and tRNA(Gln). Catalyzes the conversion of 2-thiouridine (S2U-RNA) to 2-selenouridine (Se2U-RNA). Acts in a two-step process involving geranylation of 2-thiouridine (S2U) to S-geranyl-2-thiouridine (geS2U) and subsequent selenation of the latter derivative to 2-selenouridine (Se2U) in the tRNA chain. This is tRNA 2-selenouridine synthase from Escherichia fergusonii (strain ATCC 35469 / DSM 13698 / CCUG 18766 / IAM 14443 / JCM 21226 / LMG 7866 / NBRC 102419 / NCTC 12128 / CDC 0568-73).